Reading from the N-terminus, the 469-residue chain is Phosphoenolpyruvate carboxylase (469 aa).

This sequence belongs to the PEPCase type 2 family. In terms of assembly, homotetramer. Mg(2+) is required as a cofactor.

It carries out the reaction oxaloacetate + phosphate = phosphoenolpyruvate + hydrogencarbonate. In terms of biological role, catalyzes the irreversible beta-carboxylation of phosphoenolpyruvate (PEP) to form oxaloacetate (OAA), a four-carbon dicarboxylic acid source for the tricarboxylic acid cycle. The protein is Phosphoenolpyruvate carboxylase of Pyrococcus abyssi (strain GE5 / Orsay).